A 215-amino-acid polypeptide reads, in one-letter code: FGFR1 oncogene partner 2 homolog (215 aa).

Coiled coils occupy residues 5-104 (IEKA…MSKY) and 161-185 (KEQE…ITRE). Residues 194–215 (DASESTSLSALVTNSDLSLRKN) are disordered. Residues 197–215 (ESTSLSALVTNSDLSLRKN) show a composition bias toward polar residues.

Belongs to the SIKE family.

It localises to the cytoplasm. Its function is as follows. May be involved in wound healing pathway. This chain is FGFR1 oncogene partner 2 homolog (FGFR1OP2), found in Pongo abelii (Sumatran orangutan).